Here is a 598-residue protein sequence, read N- to C-terminus: Chromodomain Y-like protein (598 aa).

The tract at residues 1–76 (MTFQASHRSA…VDKRKNKKGK (76 aa)) is disordered. The segment covering 44–56 (PSISVSSEQSGAQ) has biased composition (polar residues). Positions 61–121 (LQVERIVDKR…RHTEKQKEST (61 aa)) constitute a Chromo domain. The interval 61–309 (LQVERIVDKR…NIQTSVTGVT (249 aa)) is interaction with EZH2. Basic and acidic residues predominate over residues 65–76 (RIVDKRKNKKGK). A Phosphoserine modification is found at serine 88. Residues 112-121 (RHTEKQKEST) show a composition bias toward basic and acidic residues. The interval 112–149 (RHTEKQKESTLTRTNRTSPNNARKQISRSTNSNFSKTS) is disordered. A compositionally biased stretch (polar residues) spans 122–149 (LTRTNRTSPNNARKQISRSTNSNFSKTS). Lysine 135 is modified (N6,N6,N6-trimethyllysine; by EHMT2; alternate). Lysine 135 is modified (N6,N6-dimethyllysine; by EHMT2; alternate). Position 135 is an N6-methyllysine; by EHMT2; alternate (lysine 135). Phosphoserine occurs at positions 170, 201, and 216. A disordered region spans residues 204-226 (KSRTAVDGFQSESPEKLDPVEQG). The segment at 362-594 (SENNSLNPEV…DSMLKYLQRK (233 aa)) is acetyl-CoA-binding domain.

As to quaternary structure, forms multimers and multimerization is required for stable binding to chromatin. Interacts with HDAC1 and HDAC2 via its C-terminal acetyl-CoA-binding domain. Interacts with EZH2, EED, SUZ12, REST, EHMT1 and EHMT2. Part of a complex containing at least CDYL, REST, WIZ, SETB1, EHMT1 and EHMT2. Part of a complex containing at least CDYL, MIER1, MIER2, HDAC1 and HDAC2. Interacts with CHAF1A and CHAF1B; bridging the CAF-1 complex to the MCM2-7 (MCM) complex. Interacts with MCM3 and MCM5; bridging the CAF-1 complex to the MCM2-7 (MCM) complex. Recruited to Xist RNA-coated X chromosome. Interacts with EHMT2 and PRDM9; interaction only takes place when PRDM9 is bound to hotspot DNA. As to expression, expressed in the hippocampus with reduced expression in epileptic tissue compared to normal adjacent tissue (at protein level). Ubiquitous. Expressed at moderate levels in all tissues examined. Isoform 2: Most abundantly expressed isoform.

It localises to the nucleus. It is found in the chromosome. It carries out the reaction 3-hydroxybutanoyl-CoA = (2E)-butenoyl-CoA + H2O. Its function is as follows. Chromatin reader protein that recognizes and binds histone H3 trimethylated at 'Lys-9', dimethylated at 'Lys-27' and trimethylated at 'Lys-27' (H3K9me3, H3K27me2 and H3K27me3, respectively). Part of multimeric repressive chromatin complexes, where it is required for transmission and restoration of repressive histone marks, thereby preserving the epigenetic landscape. Required for chromatin targeting and maximal enzymatic activity of Polycomb repressive complex 2 (PRC2); acts as a positive regulator of PRC2 activity by bridging the pre-existing histone H3K27me3 and newly recruited PRC2 on neighboring nucleosomes. Acts as a corepressor for REST by facilitating histone-lysine N-methyltransferase EHMT2 recruitment and H3K9 dimethylation at REST target genes for repression. Involved in X chromosome inactivation in females: recruited to Xist RNA-coated X chromosome and facilitates propagation of H3K9me2 by anchoring EHMT2. Promotes EZH2 accumulation and H3K27me3 methylation at DNA double strand breaks (DSBs), thereby facilitating transcriptional repression at sites of DNA damage and homology-directed repair of DSBs. Required for neuronal migration during brain development by repressing expression of RHOA. By repressing the expression of SCN8A, contributes to the inhibition of intrinsic neuronal excitability and epileptogenesis. In addition to acting as a chromatin reader, acts as a hydro-lyase. Shows crotonyl-coA hydratase activity by mediating the conversion of crotonyl-CoA ((2E)-butenoyl-CoA) to beta-hydroxybutyryl-CoA (3-hydroxybutanoyl-CoA), thereby acting as a negative regulator of histone crotonylation. Histone crotonylation is required during spermatogenesis; down-regulation of histone crotonylation by CDYL regulates the reactivation of sex chromosome-linked genes in round spermatids and histone replacement in elongating spermatids. By regulating histone crotonylation and trimethylation of H3K27, may be involved in stress-induced depression-like behaviors, possibly by regulating VGF expression. Not able to recognize and bind histone H3K9me3, histone H3K27me2 and histone H3K27me3, due to the presence of a N-terminal extension that inactivates the chromo domain. In terms of biological role, not able to recognize and bind histone H3K9me3, histone H3K27me2 and histone H3K27me3, due to the absence of the chromo domain. Acts as a negative regulator of isoform 2 by displacing isoform 2 from chromatin. The protein is Chromodomain Y-like protein of Homo sapiens (Human).